The sequence spans 644 residues: Exoribonuclease 2 (644 aa).

Positions 189 to 516 (REDLTALDFV…NHRLLKAVIK (328 aa)) constitute an RNB domain. An S1 motif domain is found at 561–643 (DTRFAAEIVD…ETRSIIARPV (83 aa)).

The protein belongs to the RNR ribonuclease family. RNase II subfamily.

The protein resides in the cytoplasm. It carries out the reaction Exonucleolytic cleavage in the 3'- to 5'-direction to yield nucleoside 5'-phosphates.. In terms of biological role, involved in mRNA degradation. Hydrolyzes single-stranded polyribonucleotides processively in the 3' to 5' direction. This Escherichia coli O8 (strain IAI1) protein is Exoribonuclease 2.